The following is a 403-amino-acid chain: MAPTGAKKGLLERLDAGEVVIGDGGFVFALEKRGYVKAGPWTPEAAVEHPEAVRQLHREFLRAGANVMQTFTFYASDDKLENRGNYVAKKISGQKVNEAACDIAREVANEGDALVAGGVSQTPSYLSCKSEVEVKGIFRKQLDVFIKKNVDFLIAEYFEHVEEAVWAVEVLKESGKPVAATLCIGPQGDLNGVTPGECAVRLAKAGASVVGVNCHFDPMTCIATVKLMKEGLVAAKVKAHLMTQPLAYHTPDCGKQGFIDLPEFPFALEPRIVTRWDIHKYAREAYNLGVRYIGGCCGFEPYHTRAIAEELAPERGFLPPGSEKHGSWGSGLEMHTKPWVRARARRDYWEKLPPASGRPCCPSMSKPDAWGVTKGDADLMQQKEATTEQQLIDLFAKQCIKSN.

Residues 8–311 (KGLLERLDAG…YHTRAIAEEL (304 aa)) form the Hcy-binding domain. Zn(2+) contacts are provided by Cys214, Cys296, and Cys297.

In terms of assembly, homotetramer. Requires Zn(2+) as cofactor.

It is found in the cytoplasm. The enzyme catalyses L-homocysteine + glycine betaine = N,N-dimethylglycine + L-methionine. It functions in the pathway amine and polyamine degradation; betaine degradation; sarcosine from betaine: step 1/2. The protein operates within amino-acid biosynthesis; L-methionine biosynthesis via de novo pathway; L-methionine from L-homocysteine (BhmT route): step 1/1. Its function is as follows. Involved in the regulation of homocysteine metabolism. Converts betaine and homocysteine to dimethylglycine and methionine, respectively. This reaction is also required for the irreversible oxidation of choline. The protein is Betaine--homocysteine S-methyltransferase 1 (bhmt) of Xenopus tropicalis (Western clawed frog).